Reading from the N-terminus, the 330-residue chain is Membrane progestin receptor gamma (330 aa).

Topologically, residues 1–51 (MLSLKLPRLFRIDQVPQVFHEQGILFGYRHPQSSATACILSLFQMTNETLN) are cytoplasmic. Residues 52-72 (IWTHLLPFWFFVWRFMTALYV) traverse the membrane as a helical segment. Topologically, residues 73–81 (TDIQNDSYS) are extracellular. Residues 82–101 (WPMLVYMCTSCVYPLASSCA) form a helical membrane-spanning segment. Residues 102–113 (HTFSSMSKNARH) are Cytoplasmic-facing. The helical transmembrane segment at 114-134 (ICYFLDYGAVNLFSLGSAIAY) threads the bilayer. Residues 135-141 (SAYTFPD) lie on the Extracellular side of the membrane. Residues 142–162 (ALVCSTFHECYVALAVLNTIL) traverse the membrane as a helical segment. Residues 163 to 186 (STGLSCYSRFLELQKPRLCKLLRV) lie on the Cytoplasmic side of the membrane. A helical membrane pass occupies residues 187–207 (LAFAYPYTWDSLPIFYRLFLF). The Extracellular portion of the chain corresponds to 208-253 (PGESSRNEAMLYHQKHMGMTLLASFFYSAHLPERLAPGRFDYIGHS). The chain crosses the membrane as a helical span at residues 254–274 (HQLFHVCVILATHLQMEAILL). Over 275 to 294 (DKTLRREWLLATSRPFSFPQ) the chain is Cytoplasmic. The helical transmembrane segment at 295–315 (IAAAMLLCIIFSLSNIIYFSA) threads the bilayer. The Extracellular portion of the chain corresponds to 316–330 (ALYRIPEPELHEKET).

Belongs to the ADIPOR family.

It localises to the cell membrane. Its function is as follows. Plasma membrane progesterone (P4) receptor coupled to G proteins. Seems to act through a G(i) mediated pathway. May be involved in oocyte maturation. This chain is Membrane progestin receptor gamma, found in Mus musculus (Mouse).